The chain runs to 294 residues: 2-hydroxy-3-oxopropionate reductase (294 aa).

NAD(+)-binding positions include 4 to 18 and S95; that span reads GFIGLGIMGKPMSKN. K170 is a catalytic residue. NAD(+) is bound at residue K238.

Belongs to the HIBADH-related family. 2-hydroxy-3-oxopropionate reductase subfamily.

It catalyses the reaction (R)-glycerate + NADP(+) = 2-hydroxy-3-oxopropanoate + NADPH + H(+). The catalysed reaction is (R)-glycerate + NAD(+) = 2-hydroxy-3-oxopropanoate + NADH + H(+). It participates in carbohydrate acid metabolism; galactarate degradation; D-glycerate from galactarate: step 3/3. Functionally, catalyzes the reduction of tatronate semialdehyde to D-glycerate. The protein is 2-hydroxy-3-oxopropionate reductase of Escherichia coli O6:H1 (strain CFT073 / ATCC 700928 / UPEC).